The sequence spans 331 residues: GTP 3',8-cyclase (331 aa).

The Radical SAM core domain occupies 9–233; that stretch reads PFGRRITYLR…VRSSKVTGGP (225 aa). Arg18 provides a ligand contact to GTP. Residues Cys25 and Cys29 each coordinate [4Fe-4S] cluster. Residue Tyr31 coordinates S-adenosyl-L-methionine. Residue Cys32 participates in [4Fe-4S] cluster binding. Arg67 serves as a coordination point for GTP. Residue Gly71 coordinates S-adenosyl-L-methionine. Residue Thr98 participates in GTP binding. Ser122 serves as a coordination point for S-adenosyl-L-methionine. Position 159 (Lys159) interacts with GTP. Position 193 (Met193) interacts with S-adenosyl-L-methionine. [4Fe-4S] cluster is bound by residues Cys257 and Cys260. Position 262–264 (262–264) interacts with GTP; that stretch reads RVR. Cys274 provides a ligand contact to [4Fe-4S] cluster.

The protein belongs to the radical SAM superfamily. MoaA family. Monomer and homodimer. The cofactor is [4Fe-4S] cluster.

The enzyme catalyses GTP + AH2 + S-adenosyl-L-methionine = (8S)-3',8-cyclo-7,8-dihydroguanosine 5'-triphosphate + 5'-deoxyadenosine + L-methionine + A + H(+). It participates in cofactor biosynthesis; molybdopterin biosynthesis. In terms of biological role, catalyzes the cyclization of GTP to (8S)-3',8-cyclo-7,8-dihydroguanosine 5'-triphosphate. The polypeptide is GTP 3',8-cyclase (Ectopseudomonas mendocina (strain ymp) (Pseudomonas mendocina)).